The sequence spans 962 residues: Translation initiation factor IF-2 (962 aa).

Residues 101-366 are disordered; it reads AAQTQAAPVR…KKGKKLKLEP (266 aa). Basic and acidic residues predominate over residues 117–141; sequence DAAKARAEAATRAEARAKAEAEAAK. The segment covering 145–157 has biased composition (low complexity); that stretch reads AKAGNKAKPAAQK. The span at 173 to 216 shows a compositional bias: basic and acidic residues; that stretch reads KPAEESKAEKAQADKMPSKKPAEPKEKAAKPKHERNGKGKDAKK. Over residues 219-234 the composition is skewed to low complexity; that stretch reads KPAAPAVPQPVVSAEE. Residues 235–269 show a composition bias toward basic and acidic residues; the sequence is QAQRDEEARRAAALRAHQEALLKEKQERQARREAM. Residues 270–283 show a composition bias toward low complexity; that stretch reads KQQAEQQAKAAQEA. The span at 338 to 354 shows a compositional bias: basic and acidic residues; the sequence is GGRDRNNARNGDDERVR. Residues 462–631 enclose the tr-type G domain; sequence PRPPVVTVMG…LLEAEVLELT (170 aa). The segment at 471–478 is G1; it reads GHVDHGKT. 471 to 478 is a binding site for GTP; sequence GHVDHGKT. A G2 region spans residues 496 to 500; sequence GITQH. Residues 517–520 form a G3 region; the sequence is DTPG. GTP contacts are provided by residues 517–521 and 571–574; these read DTPGH and NKID. A G4 region spans residues 571–574; it reads NKID. The segment at 607–609 is G5; the sequence is SAK.

It belongs to the TRAFAC class translation factor GTPase superfamily. Classic translation factor GTPase family. IF-2 subfamily.

The protein localises to the cytoplasm. One of the essential components for the initiation of protein synthesis. Protects formylmethionyl-tRNA from spontaneous hydrolysis and promotes its binding to the 30S ribosomal subunits. Also involved in the hydrolysis of GTP during the formation of the 70S ribosomal complex. The chain is Translation initiation factor IF-2 from Neisseria meningitidis serogroup A / serotype 4A (strain DSM 15465 / Z2491).